The following is a 178-amino-acid chain: MLWVLVGAVLPVMLLAAPPPINKLALFPDKSAWCEAKNITQIVGHSGCEAKSIQNRACLGQCFSYSVPNTFPQSTESLVHCDSCMPAQSMWEIVTLECPGHEEVPRVDKLVEKIVHCSCQACGKEPSHEGLNVYVQGEDSPGSQPGPHSHAHPHPGGQTPEPEEPPGAPQVEEEGAED.

Residues 1–16 (MLWVLVGAVLPVMLLA) form the signal peptide. 5 disulfides stabilise this stretch: Cys34–Cys84, Cys48–Cys98, Cys58–Cys117, Cys62–Cys119, and Cys81–Cys122. A CTCK domain is found at 34–123 (CEAKNITQIV…IVHCSCQACG (90 aa)). The tract at residues 132–178 (NVYVQGEDSPGSQPGPHSHAHPHPGGQTPEPEEPPGAPQVEEEGAED) is disordered. The segment covering 140–160 (SPGSQPGPHSHAHPHPGGQTP) has biased composition (low complexity).

Belongs to the DAN family. As to quaternary structure, homodimer.

The protein resides in the secreted. Its function is as follows. Possible candidate as a tumor suppressor gene of neuroblastoma. May play an important role in preventing cells from entering the final stage (G1/S) of the transformation process. This is Neuroblastoma suppressor of tumorigenicity 1 (Nbl1) from Mus musculus (Mouse).